The primary structure comprises 211 residues: FMN-dependent NADH:quinone oxidoreductase (211 aa).

FMN is bound by residues Ser10 and 16-18 (SVS).

This sequence belongs to the azoreductase type 1 family. In terms of assembly, homodimer. FMN is required as a cofactor.

It catalyses the reaction 2 a quinone + NADH + H(+) = 2 a 1,4-benzosemiquinone + NAD(+). The enzyme catalyses N,N-dimethyl-1,4-phenylenediamine + anthranilate + 2 NAD(+) = 2-(4-dimethylaminophenyl)diazenylbenzoate + 2 NADH + 2 H(+). In terms of biological role, quinone reductase that provides resistance to thiol-specific stress caused by electrophilic quinones. Its function is as follows. Also exhibits azoreductase activity. Catalyzes the reductive cleavage of the azo bond in aromatic azo compounds to the corresponding amines. The chain is FMN-dependent NADH:quinone oxidoreductase from Parafrankia sp. (strain EAN1pec).